Here is a 445-residue protein sequence, read N- to C-terminus: MGENMKKKVVIIGGGAAGMSAASRVKRLKPEWDVKVFEATEWVSHAPCGIPYVVEGLSTPDKLMYYPPEVFIKKRGIDLHLNAEVIEVDTGYVRVRENGGEKSYEWDYLVFANGASPQVPAIEGVNLKGVFTADLPPDALAIREYMEKYKVENVVIIGGGYIGIEMAEAFAAQGKNVTMIVRGERVLRRSFDKEVTDILEEKLKKHVNLRLQEITMKIEGEERVEKVVTDAGEYKAELVILATGIKPNIELAKQLGVRIGETGAIWTNEKMQTSVENVYAAGDVAETRHVITGRRVWVPLAPAGNKMGYVAGSNIAGKELHFPGVLGTAVTKFMDVEIGKTGLTEMEALKEGYDVRTAFIKASTRPHYYPGGREIWLKGVVDNETNRLLGVQVVGSDILPRIDTAAAMLMAGFTTKDAFFTDLAYAPPFAPVWDPLIVLARVLKF.

16 to 17 contacts FAD; sequence AA. Arg-27 is a binding site for CoA. FAD contacts are provided by residues 38-39 and 45-47; these read EA and HAP. Residues 44–48, 65–66, and Arg-75 contribute to the CoA site; these read SHAPC and YY. Catalysis depends on Cys-48, which acts as the Redox-active. Residues Val-85, Asp-283, and Ala-301 each contribute to the FAD site. Residues Asn-305 and Lys-361 each contribute to the CoA site. Residue Tyr-425 participates in FAD binding. CoA-binding residues include Trp-433 and Arg-441.

This sequence belongs to the class-III pyridine nucleotide-disulfide oxidoreductase family. As to quaternary structure, homodimer. Homotetramer. It depends on FAD as a cofactor.

The enzyme catalyses NADP(+) + 2 CoA = CoA-disulfide + NADPH + H(+). It carries out the reaction NAD(+) + 2 CoA = CoA-disulfide + NADH + H(+). Its function is as follows. Catalyzes the NAD(P)H-dependent reduction of polysulfide, CoA-polysulfides, and CoA persulfide, as well as the reduction of a range of other small persulfides, including TNB and glutathione persulfides. The likely in vivo substrates are di-, poly-, and persulfide derivatives of coenzyme A, although polysulfide itself is also efficiently reduced. Shows coenzyme A disulfide reductase (CoADR) activity with both NADH and NADPH, with a preference for NADPH. May also play a role in the reduction of elemental sulfur. The protein is NAD(P)H coenzyme A polysulfide/persulfide reductase of Pyrococcus horikoshii (strain ATCC 700860 / DSM 12428 / JCM 9974 / NBRC 100139 / OT-3).